Consider the following 95-residue polypeptide: Cerebratulus toxin A-III (95 aa).

3 cysteine pairs are disulfide-bonded: C17–C38, C23–C34, and C48–C61.

Belongs to the worm cytolysin family.

The protein localises to the secreted. Its function is as follows. Permeabilizes a variety of cells. Forms large pores which allows the release of large proteins almost as rapidly as small organic molecules and inorganic ions. At sublytic concentrations, the toxin also inhibits protein kinase C and endogenous voltage-gated cation selective (sodium, calcium) channels occurring in the nervous and cardiovascular systems. The chain is Cerebratulus toxin A-III from Cerebratulus lacteus (Milky ribbon worm).